A 209-amino-acid polypeptide reads, in one-letter code: Outer-membrane lipoprotein LolB (209 aa).

The signal sequence occupies residues 1–17 (MKKSTLLFSLMAMALSG). Residue Cys18 is the site of N-palmitoyl cysteine attachment. A lipid anchor (S-diacylglycerol cysteine) is attached at Cys18.

It belongs to the LolB family. As to quaternary structure, monomer.

It is found in the cell outer membrane. Its function is as follows. Plays a critical role in the incorporation of lipoproteins in the outer membrane after they are released by the LolA protein. The polypeptide is Outer-membrane lipoprotein LolB (Haemophilus ducreyi (strain 35000HP / ATCC 700724)).